Here is a 432-residue protein sequence, read N- to C-terminus: Histidine--tRNA ligase (432 aa).

It belongs to the class-II aminoacyl-tRNA synthetase family. In terms of assembly, homodimer.

It localises to the cytoplasm. The catalysed reaction is tRNA(His) + L-histidine + ATP = L-histidyl-tRNA(His) + AMP + diphosphate + H(+). This is Histidine--tRNA ligase from Symbiobacterium thermophilum (strain DSM 24528 / JCM 14929 / IAM 14863 / T).